We begin with the raw amino-acid sequence, 252 residues long: 5-oxoprolinase subunit A (252 aa).

This sequence belongs to the LamB/PxpA family. In terms of assembly, forms a complex composed of PxpA, PxpB and PxpC.

It carries out the reaction 5-oxo-L-proline + ATP + 2 H2O = L-glutamate + ADP + phosphate + H(+). Its function is as follows. Catalyzes the cleavage of 5-oxoproline to form L-glutamate coupled to the hydrolysis of ATP to ADP and inorganic phosphate. The polypeptide is 5-oxoprolinase subunit A (Kocuria rhizophila (strain ATCC 9341 / DSM 348 / NBRC 103217 / DC2201)).